Here is a 582-residue protein sequence, read N- to C-terminus: ATP-dependent lipid A-core flippase (582 aa).

The next 6 membrane-spanning stretches (helical) occupy residues leucine 27–leucine 48, phenylalanine 63–serine 85, valine 144–serine 168, valine 170–arginine 188, leucine 244–valine 266, and threonine 283–threonine 302. One can recognise an ABC transmembrane type-1 domain in the interval valine 28–arginine 310. Residues valine 342–isoleucine 578 enclose the ABC transporter domain. Glycine 376–serine 383 lines the ATP pocket.

Belongs to the ABC transporter superfamily. Lipid exporter (TC 3.A.1.106) family. Homodimer.

The protein localises to the cell inner membrane. It catalyses the reaction ATP + H2O + lipid A-core oligosaccharideSide 1 = ADP + phosphate + lipid A-core oligosaccharideSide 2.. Functionally, involved in lipopolysaccharide (LPS) biosynthesis. Translocates lipid A-core from the inner to the outer leaflet of the inner membrane. Transmembrane domains (TMD) form a pore in the inner membrane and the ATP-binding domain (NBD) is responsible for energy generation. Shows ATPase activity. This Vibrio cholerae serotype O1 (strain ATCC 39315 / El Tor Inaba N16961) protein is ATP-dependent lipid A-core flippase.